The primary structure comprises 196 residues: ATP-dependent Clp protease proteolytic subunit (196 aa).

The Nucleophile role is filled by Ser-101. The active site involves His-126.

The protein belongs to the peptidase S14 family. Component of the chloroplastic Clp protease core complex.

The protein resides in the plastid. It is found in the chloroplast stroma. The enzyme catalyses Hydrolysis of proteins to small peptides in the presence of ATP and magnesium. alpha-casein is the usual test substrate. In the absence of ATP, only oligopeptides shorter than five residues are hydrolyzed (such as succinyl-Leu-Tyr-|-NHMec, and Leu-Tyr-Leu-|-Tyr-Trp, in which cleavage of the -Tyr-|-Leu- and -Tyr-|-Trp bonds also occurs).. Cleaves peptides in various proteins in a process that requires ATP hydrolysis. Has a chymotrypsin-like activity. Plays a major role in the degradation of misfolded proteins. The chain is ATP-dependent Clp protease proteolytic subunit from Spinacia oleracea (Spinach).